We begin with the raw amino-acid sequence, 219 residues long: MPVGVPKVPFLNPNPDPEPDSVEEELDSMEEKATWVDLYNRLYRQRWLFLGKDLEEEVANNIVGLMIHLNIEDPFWTQTLYINCLGGLIIPGLALYDTIGFVEPDVKTICLGIAASMASVVLVGGTVTERCAFPNARVMIHQPRAKEFDDRFSDLNLEGHLFLQLRNCVTQIYIHRTNKPAWVIIADLERDTFMSATEARTYGIIDGVYAFEEEYEEWS.

The tract at residues 1-22 (MPVGVPKVPFLNPNPDPEPDSV) is disordered. Ser-116 (nucleophile) is an active-site residue. Residue His-141 is part of the active site.

The protein belongs to the peptidase S14 family. In terms of assembly, component of the chloroplastic Clp protease core complex.

The protein localises to the plastid. It is found in the chloroplast stroma. The enzyme catalyses Hydrolysis of proteins to small peptides in the presence of ATP and magnesium. alpha-casein is the usual test substrate. In the absence of ATP, only oligopeptides shorter than five residues are hydrolyzed (such as succinyl-Leu-Tyr-|-NHMec, and Leu-Tyr-Leu-|-Tyr-Trp, in which cleavage of the -Tyr-|-Leu- and -Tyr-|-Trp bonds also occurs).. Cleaves peptides in various proteins in a process that requires ATP hydrolysis. Has a chymotrypsin-like activity. Plays a major role in the degradation of misfolded proteins. The polypeptide is ATP-dependent Clp protease proteolytic subunit (Pelargonium hortorum (Common geranium)).